Consider the following 352-residue polypeptide: Selenide, water dikinase (352 aa).

C21 is an active-site residue. Residues K24 and 51–53 (TND) each bind ATP. A Mg(2+)-binding site is contributed by D54. ATP contacts are provided by residues D71, D94, and 141-143 (GHS). A Mg(2+)-binding site is contributed by D94. D231 contributes to the Mg(2+) binding site.

Belongs to the selenophosphate synthase 1 family. Class I subfamily. In terms of assembly, homodimer. The cofactor is Mg(2+).

It carries out the reaction hydrogenselenide + ATP + H2O = selenophosphate + AMP + phosphate + 2 H(+). In terms of biological role, synthesizes selenophosphate from selenide and ATP. The sequence is that of Selenide, water dikinase from Myxococcus xanthus (strain DK1622).